The primary structure comprises 436 residues: 3-ketoacyl-CoA thiolase (436 aa).

Cysteine 99 (acyl-thioester intermediate) is an active-site residue. Catalysis depends on proton acceptor residues histidine 392 and cysteine 422.

Belongs to the thiolase-like superfamily. Thiolase family. In terms of assembly, heterotetramer of two alpha chains (FadJ) and two beta chains (FadI).

The protein localises to the cytoplasm. It catalyses the reaction an acyl-CoA + acetyl-CoA = a 3-oxoacyl-CoA + CoA. It functions in the pathway lipid metabolism; fatty acid beta-oxidation. Catalyzes the final step of fatty acid oxidation in which acetyl-CoA is released and the CoA ester of a fatty acid two carbons shorter is formed. The sequence is that of 3-ketoacyl-CoA thiolase from Salmonella schwarzengrund (strain CVM19633).